Here is a 106-residue protein sequence, read N- to C-terminus: Adipokinetic hormone/corazonin-related peptide (106 aa).

A signal peptide spans 1–25 (MRNSIYKLIMFAVLCMVLTSSLSYA). Glutamine 26 bears the Pyrrolidone carboxylic acid mark. At alanine 35 the chain carries Alanine amide. Positions 39–106 (SLAEAAQSTG…GLPLFSNGHL (68 aa)) are excised as a propeptide.

This sequence belongs to the AKH/HRTH/RPCH family. In terms of tissue distribution, only expressed in the head and thorax body segments of adults. Is more expressed in adult males than in females.

The protein resides in the secreted. Functionally, neuropeptide with neuromodulator or neurotransmitter role that activates the adipokinetic hormone/corazonin-related peptide receptor (ACPR). May function in regulation of post-ecdysis activities. Does not activate the A.gambiae adipokinetic hormone (AKH) and corazonin (CRZ) receptors. The protein is Adipokinetic hormone/corazonin-related peptide of Aedes aegypti (Yellowfever mosquito).